The chain runs to 545 residues: Pseudouridylate synthase RPUSD2 (545 aa).

Residues 48–121 are disordered; sequence GLRASHQQNG…PPPKKRRTGV (74 aa). Position 68 is a phosphoserine (S68). D274 is a catalytic residue. T477 bears the Phosphothreonine mark.

This sequence belongs to the pseudouridine synthase RluA family.

It carries out the reaction a uridine in mRNA = a pseudouridine in mRNA. Pseudouridine synthase that catalyzes pseudouridylation of mRNAs. This is Pseudouridylate synthase RPUSD2 from Homo sapiens (Human).